The sequence spans 347 residues: tRNA pseudouridine synthase D (347 aa).

Aspartate 81 acts as the Nucleophile in catalysis. Residues 158–304 enclose the TRUD domain; sequence GVPNYFGNQR…MRHDRRAIAL (147 aa).

Belongs to the pseudouridine synthase TruD family.

The catalysed reaction is uridine(13) in tRNA = pseudouridine(13) in tRNA. Responsible for synthesis of pseudouridine from uracil-13 in transfer RNAs. The polypeptide is tRNA pseudouridine synthase D (Vibrio vulnificus (strain YJ016)).